Consider the following 938-residue polypeptide: Cyclin-dependent kinase-like 5 (938 aa).

Residues 13 to 297 (FEILGVVGEG…TEQCLNHPTF (285 aa)) form the Protein kinase domain. Residues 19 to 27 (VGEGAYGVV) and Lys42 each bind ATP. The Proton acceptor role is filled by Asp135. Disordered stretches follow at residues 298 to 348 (QTQR…DIQN), 382 to 566 (KTYQ…RHSK), 646 to 865 (SPQP…LTAQ), and 877 to 938 (HPLS…KWKQ). 2 stretches are compositionally biased toward polar residues: residues 319–331 (ESST…QSTK) and 382–402 (KTYQ…NNNI). Ser407 carries the post-translational modification Phosphoserine. Basic and acidic residues predominate over residues 407 to 417 (SPKEAKSKTEF). Composition is skewed to polar residues over residues 434 to 462 (LKSS…QPSE), 473 to 482 (IPQSSRSPSY), and 494 to 548 (DSKS…SGRN). Ser479 bears the Phosphoserine mark. Basic and acidic residues-rich tracts occupy residues 549 to 559 (NRNEGTLDSRR) and 679 to 704 (QKSE…RHLY). Ser720 carries the post-translational modification Phosphoserine. Residues 728–748 (HENNVSTRVSSLPSDSSSGTN) are compositionally biased toward polar residues. Ser761 is subject to Phosphoserine. Basic and acidic residues-rich tracts occupy residues 769–778 (DQLKEKEKQG) and 817–827 (RPKEWRPEKLS). Over residues 880–891 (SQATGGSSNIRQ) the composition is skewed to polar residues.

The protein belongs to the protein kinase superfamily. CMGC Ser/Thr protein kinase family. CDC2/CDKX subfamily. Interacts with MECP2. Post-translationally, autophosphorylated.

It localises to the nucleus. Its subcellular location is the cytoplasm. The protein resides in the cytoskeleton. The protein localises to the cilium basal body. It is found in the microtubule organizing center. It localises to the centrosome. The catalysed reaction is L-seryl-[protein] + ATP = O-phospho-L-seryl-[protein] + ADP + H(+). It catalyses the reaction L-threonyl-[protein] + ATP = O-phospho-L-threonyl-[protein] + ADP + H(+). Mediates phosphorylation of MECP2. May regulate ciliogenesis. The sequence is that of Cyclin-dependent kinase-like 5 from Mus musculus (Mouse).